The primary structure comprises 174 residues: NADH-quinone oxidoreductase subunit C (174 aa).

It belongs to the complex I 30 kDa subunit family. NDH-1 is composed of 14 different subunits. Subunits NuoB, C, D, E, F, and G constitute the peripheral sector of the complex.

It localises to the cell membrane. It carries out the reaction a quinone + NADH + 5 H(+)(in) = a quinol + NAD(+) + 4 H(+)(out). Functionally, NDH-1 shuttles electrons from NADH, via FMN and iron-sulfur (Fe-S) centers, to quinones in the respiratory chain. The immediate electron acceptor for the enzyme in this species is believed to be ubiquinone. Couples the redox reaction to proton translocation (for every two electrons transferred, four hydrogen ions are translocated across the cytoplasmic membrane), and thus conserves the redox energy in a proton gradient. This chain is NADH-quinone oxidoreductase subunit C, found in Roseiflexus sp. (strain RS-1).